We begin with the raw amino-acid sequence, 475 residues long: FAD-dependent monooxygenase janM (475 aa).

Residues 8–24 (VIIVGGSIGGLTLAHCL) traverse the membrane as a helical segment. Residues glutamate 35, glycine 49, and arginine 108 each contribute to the FAD site. A glycan (N-linked (GlcNAc...) asparagine) is linked at asparagine 147. Aspartate 299 and alanine 312 together coordinate FAD. A helical transmembrane segment spans residues 432–451 (GWRFHAMLCILMLAILYTWV).

Belongs to the paxM FAD-dependent monooxygenase family. FAD serves as cofactor.

The protein resides in the membrane. It functions in the pathway secondary metabolite biosynthesis. Functionally, FAD-dependent monooxygenase; part of the gene cluster that mediates the biosynthesis of the indole diterpenes janthitremanes such as shearinine K or shearinine A. The geranylgeranyl diphosphate (GGPP) synthase janG catalyzes the first step in janthitremane biosynthesis via conversion of farnesyl pyrophosphate and isopentyl pyrophosphate into geranylgeranyl pyrophosphate (GGPP). Condensation of indole-3-glycerol phosphate with GGPP by the prenyl transferase janC then forms 3-geranylgeranylindole (3-GGI). Epoxidation by the FAD-dependent monooxygenase janM leads to a epoxidized-GGI that is substrate of the terpene cyclase janB for cyclization to yield paspaline. Paspaline is subsequently converted to 13-desoxypaspaline by the cytochrome P450 monooxygenase janP, via beta-PC-M6 in a series of alpha-face oxidations. The cytochrome P450 monooxygenase janQ is proposed to carry out sequential beta-face oxidation steps at C-7 and C-13 of 13-desoxypaspaline to form paspalicine and paspalinine respectively. The indole diterpene prenyltransferase janD may then convert paspalinine into shearinine K which is substrate of janO and/or additional enzymes for oxidation and cyclization to generate shearinine A. The sequence is that of FAD-dependent monooxygenase janM from Penicillium janthinellum (Penicillium vitale).